The primary structure comprises 199 residues: Putative pseudouridine methyltransferase (199 aa).

S-adenosyl-L-methionine is bound by residues Met-132 and Cys-186.

It belongs to the methyltransferase superfamily. TrmY family.

Its subcellular location is the cytoplasm. This Vibrio atlanticus (strain LGP32) (Vibrio splendidus (strain Mel32)) protein is Putative pseudouridine methyltransferase.